The primary structure comprises 404 residues: Cysteine desulfurase IscS (404 aa).

Residues 73–74 (AT), N153, Q181, and 201–203 (SAH) each bind pyridoxal 5'-phosphate. K204 is modified (N6-(pyridoxal phosphate)lysine). T241 contributes to the pyridoxal 5'-phosphate binding site. C327 (cysteine persulfide intermediate) is an active-site residue. Residue C327 participates in [2Fe-2S] cluster binding.

This sequence belongs to the class-V pyridoxal-phosphate-dependent aminotransferase family. NifS/IscS subfamily. As to quaternary structure, homodimer. Forms a heterotetramer with IscU, interacts with other sulfur acceptors. Pyridoxal 5'-phosphate is required as a cofactor.

It is found in the cytoplasm. The catalysed reaction is (sulfur carrier)-H + L-cysteine = (sulfur carrier)-SH + L-alanine. The protein operates within cofactor biosynthesis; iron-sulfur cluster biosynthesis. Functionally, master enzyme that delivers sulfur to a number of partners involved in Fe-S cluster assembly, tRNA modification or cofactor biosynthesis. Catalyzes the removal of elemental sulfur atoms from cysteine to produce alanine. Functions as a sulfur delivery protein for Fe-S cluster synthesis onto IscU, an Fe-S scaffold assembly protein, as well as other S acceptor proteins. This chain is Cysteine desulfurase IscS, found in Anaeromyxobacter dehalogenans (strain 2CP-C).